The sequence spans 306 residues: Glutathione transport system permease protein GsiC (306 aa).

The Cytoplasmic portion of the chain corresponds to 1 to 8 (MLNYVLKR). Residues 9 to 29 (LLGLIPTLLIVAVLVFLFVHL) form a helical membrane-spanning segment. Over 30–102 (LPGDPARLIA…SRFLPTLWLT (73 aa)) the chain is Periplasmic. The ABC transmembrane type-1 domain maps to 95–292 (FLPTLWLTIT…LEFILINLVV (198 aa)). Residues 103-123 (ITSMIWAVLFGMAIGIAAAVW) traverse the membrane as a helical segment. Over 124–134 (RNRWPDRVGMT) the chain is Cytoplasmic. The chain crosses the membrane as a helical span at residues 135-155 (LAVTGISFPAFALGMLLMQIF). The Periplasmic segment spans residues 156–168 (SVDLGWLPTVGAD). A helical membrane pass occupies residues 169-189 (SWQHYILPSLTLGAAVASVMA). The Cytoplasmic segment spans residues 190-228 (RFTRSSFVDVLSEDYMRTARAKGVSETWVVLKHGLRNAM). The helical transmembrane segment at 229 to 249 (IPVVTMMGLQFGFLLGGSIVV) threads the bilayer. Residues 250-278 (EKVFNWPGLGRLLVDSVDMRDYPVIQAEV) are Periplasmic-facing. Residues 279–299 (LLFSLEFILINLVVDVLYAAI) traverse the membrane as a helical segment. Residues 300 to 306 (NPAIRYK) lie on the Cytoplasmic side of the membrane.

Belongs to the binding-protein-dependent transport system permease family. In terms of assembly, the complex is composed of two ATP-binding proteins (GsiA), two transmembrane proteins (GsiC and GsiD) and a solute-binding protein (GsiB).

The protein resides in the cell inner membrane. Functionally, part of the ABC transporter complex GsiABCD involved in glutathione import. Probably responsible for the translocation of the substrate across the membrane. The protein is Glutathione transport system permease protein GsiC of Salmonella choleraesuis (strain SC-B67).